The chain runs to 453 residues: Cytochrome P450 monooxygenase CYP2 (453 aa).

The helical transmembrane segment at 13–29 (MVITMLHGSSTYSLLAS) threads the bilayer. N-linked (GlcNAc...) asparagine glycosylation is present at Asn85. Cys397 contributes to the heme binding site.

Belongs to the cytochrome P450 family. It depends on heme as a cofactor.

Its subcellular location is the membrane. The protein operates within secondary metabolite biosynthesis. Functionally, cytochrome P450 monooxygenase; part of the gene cluster that mediates the biosynthesis of a tyrosine-derived cytochalasan acting as a fungal signal recognized by resistant rice plants and leads to avirulence in Pi33 resistant rice cultivars. The first step in the pathway is catalyzed by the hybrid PKS-NRPS ACE1, assisted by the enoyl reductase RAP1, that are responsible for fusion of the tyrosine precursor and the polyketide backbone. The polyketide synthase module (PKS) of ACE1 is responsible for the synthesis of the polyketide backbone and the downstream nonribosomal peptide synthetase (NRPS) amidates the carboxyl end of the polyketide with the tyrosine precursor. Because ACE1 lacks a designated enoylreductase (ER) domain, the required activity is provided the enoyl reductase RAP1. Reduction by the hydrolyase ORFZ, followed by dehydration and intra-molecular Diels-Alder cyclization by the Diels-Alderase ORF3 then yield the required isoindolone-fused macrocycle. A number of oxidative steps catalyzed by the tailoring enzymes identified within the cluster, including cytochrome P450 monooxygenases CYP1 to CYP4, the FAD-linked oxidoreductase OXR2 and the short-chain dehydrogenase/reductase OXR1, are further required to afford the final cytochalasans that confer avirulence and which have still to be identified. The monooxygenase CYP1 has been shown to be a site-selective C-18 hydroxylase whereas the function of CYP3 is the site-selective epoxidation of the C-6/C-7 olefin that is present in some intermediate compounds. Finally, SYN2 and RAP2 are not required for avirulence in Pi33 resistant rice cultivars. This Pyricularia oryzae (strain 70-15 / ATCC MYA-4617 / FGSC 8958) (Rice blast fungus) protein is Cytochrome P450 monooxygenase CYP2.